The chain runs to 141 residues: Large ribosomal subunit protein uL11 (141 aa).

Belongs to the universal ribosomal protein uL11 family. As to quaternary structure, part of the ribosomal stalk of the 50S ribosomal subunit. Interacts with L10 and the large rRNA to form the base of the stalk. L10 forms an elongated spine to which L12 dimers bind in a sequential fashion forming a multimeric L10(L12)X complex. Post-translationally, one or more lysine residues are methylated.

Its function is as follows. Forms part of the ribosomal stalk which helps the ribosome interact with GTP-bound translation factors. This is Large ribosomal subunit protein uL11 from Chlorobaculum parvum (strain DSM 263 / NCIMB 8327) (Chlorobium vibrioforme subsp. thiosulfatophilum).